A 174-amino-acid chain; its full sequence is Shikimate kinase 2 (174 aa).

Position 12–17 (12–17 (GCGKTT)) interacts with ATP. Residues Thr-16 and Asp-32 each contribute to the Mg(2+) site. The substrate site is built by Asp-34, Arg-58, and Gly-79. The tract at residues 112–126 (QAAPEEDLRPTLTGK) is LID domain. Arg-120 provides a ligand contact to ATP. Arg-139 provides a ligand contact to substrate.

It belongs to the shikimate kinase family. AroL subfamily. In terms of assembly, monomer. Mg(2+) serves as cofactor.

It localises to the cytoplasm. The enzyme catalyses shikimate + ATP = 3-phosphoshikimate + ADP + H(+). It functions in the pathway metabolic intermediate biosynthesis; chorismate biosynthesis; chorismate from D-erythrose 4-phosphate and phosphoenolpyruvate: step 5/7. Its function is as follows. Catalyzes the specific phosphorylation of the 3-hydroxyl group of shikimic acid using ATP as a cosubstrate. The polypeptide is Shikimate kinase 2 (Shigella dysenteriae serotype 1 (strain Sd197)).